The following is a 381-amino-acid chain: Sulfate adenylyltransferase (381 aa).

Belongs to the sulfate adenylyltransferase family.

It catalyses the reaction sulfate + ATP + H(+) = adenosine 5'-phosphosulfate + diphosphate. The protein operates within sulfur metabolism; hydrogen sulfide biosynthesis; sulfite from sulfate: step 1/3. In Carboxydothermus hydrogenoformans (strain ATCC BAA-161 / DSM 6008 / Z-2901), this protein is Sulfate adenylyltransferase.